The following is a 202-amino-acid chain: uncharacterized protein (202 aa).

A helical transmembrane segment spans residues 175 to 195 (INTGIALFIILTSLLVYFIQF).

The protein localises to the membrane. This is an uncharacterized protein from Dictyostelium discoideum (Social amoeba).